Here is a 205-residue protein sequence, read N- to C-terminus: Histidine biosynthesis bifunctional protein HisIE (205 aa).

Positions 1-115 (MIDIKELKFD…DEETEDGIEI (115 aa)) are phosphoribosyl-AMP cyclohydrolase. The phosphoribosyl-ATP pyrophosphohydrolase stretch occupies residues 116–205 (LNKLYERIKG…YNELERRYKK (90 aa)).

It in the N-terminal section; belongs to the PRA-CH family. The protein in the C-terminal section; belongs to the PRA-PH family.

The protein localises to the cytoplasm. It carries out the reaction 1-(5-phospho-beta-D-ribosyl)-ATP + H2O = 1-(5-phospho-beta-D-ribosyl)-5'-AMP + diphosphate + H(+). The enzyme catalyses 1-(5-phospho-beta-D-ribosyl)-5'-AMP + H2O = 1-(5-phospho-beta-D-ribosyl)-5-[(5-phospho-beta-D-ribosylamino)methylideneamino]imidazole-4-carboxamide. The protein operates within amino-acid biosynthesis; L-histidine biosynthesis; L-histidine from 5-phospho-alpha-D-ribose 1-diphosphate: step 2/9. It participates in amino-acid biosynthesis; L-histidine biosynthesis; L-histidine from 5-phospho-alpha-D-ribose 1-diphosphate: step 3/9. The polypeptide is Histidine biosynthesis bifunctional protein HisIE (Caldanaerobacter subterraneus subsp. tengcongensis (strain DSM 15242 / JCM 11007 / NBRC 100824 / MB4) (Thermoanaerobacter tengcongensis)).